Here is a 210-residue protein sequence, read N- to C-terminus: Cell division protein SepF (210 aa).

The tract at residues 13 to 101 is disordered; sequence GLADGDEYDE…EPVDPGYRAP (89 aa). Composition is skewed to basic and acidic residues over residues 22 to 70 and 83 to 93; these read EQPR…ERPE and VEPRRPARPEP.

It belongs to the SepF family. As to quaternary structure, homodimer. Interacts with FtsZ.

It is found in the cytoplasm. Cell division protein that is part of the divisome complex and is recruited early to the Z-ring. Probably stimulates Z-ring formation, perhaps through the cross-linking of FtsZ protofilaments. Its function overlaps with FtsA. The chain is Cell division protein SepF from Micrococcus luteus (strain ATCC 4698 / DSM 20030 / JCM 1464 / CCM 169 / CCUG 5858 / IAM 1056 / NBRC 3333 / NCIMB 9278 / NCTC 2665 / VKM Ac-2230) (Micrococcus lysodeikticus).